We begin with the raw amino-acid sequence, 177 residues long: Transcription termination/antitermination protein NusG (177 aa).

The KOW domain maps to 125–150 (EGENVRITEGPFANFTAIVEEYDMVR).

This sequence belongs to the NusG family.

Participates in transcription elongation, termination and antitermination. The sequence is that of Transcription termination/antitermination protein NusG from Campylobacter jejuni subsp. jejuni serotype O:2 (strain ATCC 700819 / NCTC 11168).